The following is a 113-amino-acid chain: Seminal vesicle secretory protein 4 (113 aa).

The N-terminal stretch at 1 to 21 is a signal peptide; the sequence is MNSTSLFLFSLLLLLVTGAIG. The tract at residues 31 to 113 is disordered; that stretch reads SEETVRESFS…KSRFSQDALE (83 aa). 2 stretches are compositionally biased toward low complexity: residues 38-50 and 83-98; these read SFSM…MSRS and IISS…GESS.

The protein belongs to the SVP2/SVP5/SVP6 family. In terms of tissue distribution, testis.

It localises to the secreted. The protein resides in the extracellular space. In Mus musculus (Mouse), this protein is Seminal vesicle secretory protein 4 (Svs4).